The following is a 1091-amino-acid chain: ATPase family AAA domain-containing protein 2 (1091 aa).

The tract at residues 32 to 211 (LEDLGVFNET…HFERRRKRSR (180 aa)) is disordered. Residues 53–62 (KQKDIQRTDE) are compositionally biased toward basic and acidic residues. Acidic residues predominate over residues 74 to 119 (SSEEGEDQEHEDDGEDEDDEDEDDDDDDDDDDDDDEDDEDEEDGEE). Lys-148 is covalently cross-linked (Glycyl lysine isopeptide (Lys-Gly) (interchain with G-Cter in SUMO2)). Phosphoserine is present on residues Ser-158, Ser-168, Ser-173, and Ser-241. 298-305 (GPPGTGKT) serves as a coordination point for ATP. A phosphoserine mark is found at Ser-577 and Ser-582. Coiled coils occupy residues 801 to 825 (LTAEEVKRLEEQEEDTFRELRIFLR) and 917 to 943 (YAIIKEELDEDFEQLCEEIQESRKKRG). Residues 811 to 923 (EQEEDTFREL…DTAYAIIKEE (113 aa)) enclose the Bromo domain. Residue Lys-959 forms a Glycyl lysine isopeptide (Lys-Gly) (interchain with G-Cter in SUMO2) linkage. Residues 961 to 985 (NSTLVGDKRSDPEQNEKLKTPSTPV) form a disordered region. Positions 966 to 979 (GDKRSDPEQNEKLK) are enriched in basic and acidic residues. Ser-970 is modified (phosphoserine). Lys-979 is covalently cross-linked (Glycyl lysine isopeptide (Lys-Gly) (interchain with G-Cter in SUMO2)). 2 positions are modified to phosphothreonine: Thr-980 and Thr-983. Ser-1003 is modified (phosphoserine). Phosphothreonine is present on Thr-1024.

Belongs to the AAA ATPase family. As to quaternary structure, interaction with ESR1 and NCOA3 is enhanced by estradiol. Interacts with acetylated lysine residues on histone H1.4, H2A, H2B and H3 (in vitro).

It is found in the nucleus. The catalysed reaction is ATP + H2O = ADP + phosphate + H(+). Its function is as follows. May be a transcriptional coactivator of the nuclear receptor ESR1 required to induce the expression of a subset of estradiol target genes, such as CCND1, MYC and E2F1. May play a role in the recruitment or occupancy of CREBBP at some ESR1 target gene promoters. May be required for histone hyperacetylation. The protein is ATPase family AAA domain-containing protein 2 (ATAD2) of Pongo abelii (Sumatran orangutan).